The following is a 294-amino-acid chain: tRNA dimethylallyltransferase (294 aa).

Gly10–Thr17 contacts ATP. Thr12 to Thr17 is a substrate binding site. The interaction with substrate tRNA stretch occupies residues Asp35 to Gln38.

Belongs to the IPP transferase family. As to quaternary structure, monomer. It depends on Mg(2+) as a cofactor.

It catalyses the reaction adenosine(37) in tRNA + dimethylallyl diphosphate = N(6)-dimethylallyladenosine(37) in tRNA + diphosphate. Its function is as follows. Catalyzes the transfer of a dimethylallyl group onto the adenine at position 37 in tRNAs that read codons beginning with uridine, leading to the formation of N6-(dimethylallyl)adenosine (i(6)A). This Streptococcus pneumoniae (strain Hungary19A-6) protein is tRNA dimethylallyltransferase.